The sequence spans 392 residues: Cell division protein FtsZ (392 aa).

Residues 24–28, 111–113, glutamate 142, arginine 145, and aspartate 189 each bind GTP; these read GGGCN and GTG.

This sequence belongs to the FtsZ family. Homodimer. Polymerizes to form a dynamic ring structure in a strictly GTP-dependent manner. Interacts directly with several other division proteins.

It localises to the cytoplasm. Essential cell division protein that forms a contractile ring structure (Z ring) at the future cell division site. The regulation of the ring assembly controls the timing and the location of cell division. One of the functions of the FtsZ ring is to recruit other cell division proteins to the septum to produce a new cell wall between the dividing cells. Binds GTP and shows GTPase activity. The protein is Cell division protein FtsZ of Neisseria meningitidis serogroup A / serotype 4A (strain DSM 15465 / Z2491).